The following is a 95-amino-acid chain: Aspartyl/glutamyl-tRNA(Asn/Gln) amidotransferase subunit C (95 aa).

This sequence belongs to the GatC family. Heterotrimer of A, B and C subunits.

The enzyme catalyses L-glutamyl-tRNA(Gln) + L-glutamine + ATP + H2O = L-glutaminyl-tRNA(Gln) + L-glutamate + ADP + phosphate + H(+). It catalyses the reaction L-aspartyl-tRNA(Asn) + L-glutamine + ATP + H2O = L-asparaginyl-tRNA(Asn) + L-glutamate + ADP + phosphate + 2 H(+). Functionally, allows the formation of correctly charged Asn-tRNA(Asn) or Gln-tRNA(Gln) through the transamidation of misacylated Asp-tRNA(Asn) or Glu-tRNA(Gln) in organisms which lack either or both of asparaginyl-tRNA or glutaminyl-tRNA synthetases. The reaction takes place in the presence of glutamine and ATP through an activated phospho-Asp-tRNA(Asn) or phospho-Glu-tRNA(Gln). The chain is Aspartyl/glutamyl-tRNA(Asn/Gln) amidotransferase subunit C from Laribacter hongkongensis (strain HLHK9).